The following is a 100-amino-acid chain: Aspartyl/glutamyl-tRNA(Asn/Gln) amidotransferase subunit C (100 aa).

The protein belongs to the GatC family. Heterotrimer of A, B and C subunits.

It carries out the reaction L-glutamyl-tRNA(Gln) + L-glutamine + ATP + H2O = L-glutaminyl-tRNA(Gln) + L-glutamate + ADP + phosphate + H(+). It catalyses the reaction L-aspartyl-tRNA(Asn) + L-glutamine + ATP + H2O = L-asparaginyl-tRNA(Asn) + L-glutamate + ADP + phosphate + 2 H(+). In terms of biological role, allows the formation of correctly charged Asn-tRNA(Asn) or Gln-tRNA(Gln) through the transamidation of misacylated Asp-tRNA(Asn) or Glu-tRNA(Gln) in organisms which lack either or both of asparaginyl-tRNA or glutaminyl-tRNA synthetases. The reaction takes place in the presence of glutamine and ATP through an activated phospho-Asp-tRNA(Asn) or phospho-Glu-tRNA(Gln). This Novosphingobium aromaticivorans (strain ATCC 700278 / DSM 12444 / CCUG 56034 / CIP 105152 / NBRC 16084 / F199) protein is Aspartyl/glutamyl-tRNA(Asn/Gln) amidotransferase subunit C.